A 180-amino-acid chain; its full sequence is MAGVKYPGQDPVDLDIYQSSHMVDYQPYRKHKYSRVTPQEQAKLDAQLRDKEFYRPIPNPNPKLTDGYPAFKRPHMTAKDLGLPGFFPSQEHEATREDERKFTSTCHFTYPASHDLHLAQGDPNQVLQSADFPCLVDPKHQPAAEMAKGYLLLPGCPCLHCHIVKVPILNRWGPLMPFYQ.

As to quaternary structure, microtubule inner protein component of sperm flagellar doublet microtubules. Testis-specific. Detected in the germ cell lineage at all stages.

Its subcellular location is the nucleus. It localises to the cytoplasm. The protein resides in the cytoskeleton. It is found in the flagellum axoneme. Microtubule inner protein (MIP) part of the dynein-decorated doublet microtubules (DMTs) in flagella axoneme. This chain is Protein SPMIP9, found in Homo sapiens (Human).